A 297-amino-acid polypeptide reads, in one-letter code: Protein-L-isoaspartate O-methyltransferase (297 aa).

The interval 20-57 (RKPAPARTAGMPAVGAPGPAQAQAKARDKQPSAPTAAA) is disordered. Low complexity predominate over residues 28 to 43 (AGMPAVGAPGPAQAQA). Serine 133 is an active-site residue.

Belongs to the methyltransferase superfamily. L-isoaspartyl/D-aspartyl protein methyltransferase family.

The protein resides in the cytoplasm. The catalysed reaction is [protein]-L-isoaspartate + S-adenosyl-L-methionine = [protein]-L-isoaspartate alpha-methyl ester + S-adenosyl-L-homocysteine. Its function is as follows. Catalyzes the methyl esterification of L-isoaspartyl residues in peptides and proteins that result from spontaneous decomposition of normal L-aspartyl and L-asparaginyl residues. It plays a role in the repair and/or degradation of damaged proteins. The polypeptide is Protein-L-isoaspartate O-methyltransferase (Cupriavidus pinatubonensis (strain JMP 134 / LMG 1197) (Cupriavidus necator (strain JMP 134))).